The following is a 433-amino-acid chain: Serine hydroxymethyltransferase (433 aa).

(6S)-5,6,7,8-tetrahydrofolate contacts are provided by residues leucine 132 and 136 to 138; that span reads GHL. An N6-(pyridoxal phosphate)lysine modification is found at lysine 241.

This sequence belongs to the SHMT family. As to quaternary structure, homodimer. The cofactor is pyridoxal 5'-phosphate.

The protein localises to the cytoplasm. It catalyses the reaction (6R)-5,10-methylene-5,6,7,8-tetrahydrofolate + glycine + H2O = (6S)-5,6,7,8-tetrahydrofolate + L-serine. It participates in one-carbon metabolism; tetrahydrofolate interconversion. It functions in the pathway amino-acid biosynthesis; glycine biosynthesis; glycine from L-serine: step 1/1. Functionally, catalyzes the reversible interconversion of serine and glycine with tetrahydrofolate (THF) serving as the one-carbon carrier. This reaction serves as the major source of one-carbon groups required for the biosynthesis of purines, thymidylate, methionine, and other important biomolecules. Also exhibits THF-independent aldolase activity toward beta-hydroxyamino acids, producing glycine and aldehydes, via a retro-aldol mechanism. This Rhodopseudomonas palustris (strain BisA53) protein is Serine hydroxymethyltransferase.